We begin with the raw amino-acid sequence, 405 residues long: Adenosylhomocysteinase (405 aa).

Substrate-binding residues include Asp-113 and Glu-138. 139 to 141 provides a ligand contact to NAD(+); the sequence is TTT. Substrate-binding residues include Lys-168 and Asp-172. Residues Asn-173, 202–207, Glu-225, Asn-260, 281–283, and Asn-327 contribute to the NAD(+) site; these read GYGWCG and AGH.

The protein belongs to the adenosylhomocysteinase family. NAD(+) serves as cofactor.

The protein resides in the cytoplasm. It catalyses the reaction S-adenosyl-L-homocysteine + H2O = L-homocysteine + adenosine. It functions in the pathway amino-acid biosynthesis; L-homocysteine biosynthesis; L-homocysteine from S-adenosyl-L-homocysteine: step 1/1. Its function is as follows. May play a key role in the regulation of the intracellular concentration of adenosylhomocysteine. This chain is Adenosylhomocysteinase, found in Archaeoglobus fulgidus (strain ATCC 49558 / DSM 4304 / JCM 9628 / NBRC 100126 / VC-16).